We begin with the raw amino-acid sequence, 828 residues long: Periplasmic nitrate reductase (828 aa).

A signal peptide (tat-type signal) is located at residues 1–31 (MKLSRRSFMKANAVAAAAAAAGLSVPGVARA). The 4Fe-4S Mo/W bis-MGD-type domain maps to 39–95 (IKWDKAPCRFCGTGCGVLVGTQQGRVVACQGDPDAPVNRGLNCIKGYFLPKIMYGKD). [4Fe-4S] cluster contacts are provided by Cys46, Cys49, Cys53, and Cys81. Mo-bis(molybdopterin guanine dinucleotide) contacts are provided by residues Lys83, Gln150, Asn175, Cys179, 212 to 219 (WGSNMAEM), 243 to 247 (STFQH), 262 to 264 (QSD), Met372, Gln376, Asn482, 508 to 509 (SD), Lys531, Asp558, and 718 to 727 (TGRVLEHWHT). Substrate is bound at residue Phe794. Asn802 and Lys819 together coordinate Mo-bis(molybdopterin guanine dinucleotide).

The protein belongs to the prokaryotic molybdopterin-containing oxidoreductase family. NasA/NapA/NarB subfamily. In terms of assembly, component of the periplasmic nitrate reductase NapAB complex composed of NapA and NapB. [4Fe-4S] cluster is required as a cofactor. It depends on Mo-bis(molybdopterin guanine dinucleotide) as a cofactor. Predicted to be exported by the Tat system. The position of the signal peptide cleavage has not been experimentally proven.

The protein resides in the periplasm. The catalysed reaction is 2 Fe(II)-[cytochrome] + nitrate + 2 H(+) = 2 Fe(III)-[cytochrome] + nitrite + H2O. Functionally, catalytic subunit of the periplasmic nitrate reductase complex NapAB. Receives electrons from NapB and catalyzes the reduction of nitrate to nitrite. The protein is Periplasmic nitrate reductase of Salmonella paratyphi C (strain RKS4594).